The following is an 842-amino-acid chain: Non-motile and phage-resistance protein (842 aa).

A run of 3 helical transmembrane segments spans residues 29–50 (VFVR…AFGV), 283–303 (GAFS…LLMI), and 343–363 (VYLS…VVSG). One can recognise a PAS domain in the interval 318–389 (SERRFRLAVE…QALANAAMYG (72 aa)). Positions 607-830 (NMSHELRTPL…TVSFTLPVRH (224 aa)) constitute a Histidine kinase domain. A Phosphohistidine; by autocatalysis modification is found at His610.

The protein localises to the cell membrane. The enzyme catalyses ATP + protein L-histidine = ADP + protein N-phospho-L-histidine.. Its function is as follows. Member of the two-component regulatory system involved in the regulation of polar organelle development. PleC functions as a membrane-associated protein kinase that transfers phosphate to the response regulator PleD, leading to its activation. The protein is Non-motile and phage-resistance protein (pleC) of Caulobacter vibrioides (strain ATCC 19089 / CIP 103742 / CB 15) (Caulobacter crescentus).